We begin with the raw amino-acid sequence, 902 residues long: Cytosolic 10-formyltetrahydrofolate dehydrogenase (902 aa).

The tract at residues 1–310 (MKIAVIGQSL…LASNFFKGAA (310 aa)) is hydrolase domain. Phosphoserine is present on Ser-9. Lys-38 carries the post-translational modification N6-succinyllysine. 88–90 (QFI) lines the (6R)-10-formyltetrahydrofolate pocket. His-106 functions as the Proton donor in the catalytic mechanism. Asp-142 serves as a coordination point for (6R)-10-formyltetrahydrofolate. The Carrier domain maps to 318–395 (EAELVTAEAV…DFIQLLVRKL (78 aa)). Ser-354 is subject to O-(pantetheine 4'-phosphoryl)serine. The aldehyde dehydrogenase domain stretch occupies residues 417–902 (TVRMPHQLFI…LRVKTVTFEY (486 aa)). NADP(+)-binding positions include 571–573 (IPW) and 597–600 (KPAQ). Ser-629 and Ser-631 each carry phosphoserine. NADP(+) contacts are provided by residues 630 to 635 (GSLVGQ) and 650 to 651 (GS). Lys-660 is subject to N6-succinyllysine. Catalysis depends on Glu-673, which acts as the Proton acceptor. 673 to 674 (EL) is an NADP(+) binding site. The active-site Proton donor is the Cys-707. Residue Lys-757 participates in NADP(+) binding. Lys-767 carries the N6-succinyllysine modification. 804-806 (ESF) contributes to the NADP(+) binding site. Residue Ser-825 is modified to Phosphoserine. At Lys-882 the chain carries N6-acetyllysine.

It in the N-terminal section; belongs to the GART family. The protein in the C-terminal section; belongs to the aldehyde dehydrogenase family. ALDH1L subfamily. Homotetramer. In terms of processing, phosphopantetheinylation at Ser-354 by AASDHPPT is required for the formyltetrahydrofolate dehydrogenase activity. In terms of tissue distribution, highly expressed in liver, pancreas and kidney.

It localises to the cytoplasm. It is found in the cytosol. It carries out the reaction (6R)-10-formyltetrahydrofolate + NADP(+) + H2O = (6S)-5,6,7,8-tetrahydrofolate + CO2 + NADPH + H(+). Its function is as follows. Cytosolic 10-formyltetrahydrofolate dehydrogenase that catalyzes the NADP(+)-dependent conversion of 10-formyltetrahydrofolate to tetrahydrofolate and carbon dioxide. May also have an NADP(+)-dependent aldehyde dehydrogenase activity towards formaldehyde, acetaldehyde, propionaldehyde, and benzaldehyde. The protein is Cytosolic 10-formyltetrahydrofolate dehydrogenase of Homo sapiens (Human).